The chain runs to 659 residues: ATP-binding cassette sub-family D member 3 (659 aa).

Positions 1 to 61 (MAAFSKYLTA…GKKERAVVDK (61 aa)) are interaction with PEX19. N-linked (GlcNAc...) asparagine glycosylation is present at Asn-12. Lys-61 bears the N6-acetyllysine mark. Residues 84–104 (GYLLLIAVMLVSRTYCDVWMI) form a helical membrane-spanning segment. The ABC transmembrane type-1 domain occupies 85–372 (YLLLIAVMLV…MLLRMSQALG (288 aa)). N-linked (GlcNAc...) asparagine glycosylation occurs at Asn-106. The helical transmembrane segment at 126–146 (LFNFIAAMPLISLVNNFLKYG) threads the bilayer. N-linked (GlcNAc...) asparagine glycosylation occurs at Asn-206. A helical transmembrane segment spans residues 224-244 (AIGAQGPASMMAYLLVSGLFL). N6-acetyllysine is present on Lys-260. A helical membrane pass occupies residues 313-333 (MGFIDSIIAKYVATVVGYLVV). Residue Lys-399 is modified to N6-acetyllysine. At Ser-424 the chain carries Phosphoserine. The region spanning 434-659 (INTDNIIKFD…ITEDTVEFGS (226 aa)) is the ABC transporter domain. ATP is bound at residue 473–480 (GPNGCGKS). Position 533 is an N6-acetyllysine (Lys-533). The residue at position 659 (Ser-659) is a Phosphoserine.

The protein belongs to the ABC transporter superfamily. ABCD family. Peroxisomal fatty acyl CoA transporter (TC 3.A.1.203) subfamily. Homodimers. Can form heterodimers with ABCD1 and ABCD2. Dimerization is necessary to form an active transporter. Interacts with PEX19; mediates the targeting of ABCD3 to peroxisomes. Ubiquitinated by PEX2 during pexophagy in response to starvation, leading to its degradation.

The protein localises to the peroxisome membrane. The catalysed reaction is a very long-chain fatty acyl-CoA + H2O = a very long-chain fatty acid + CoA + H(+). It carries out the reaction a very long-chain fatty acid(in) + ATP + H2O = a very long-chain fatty acid(out) + ADP + phosphate + H(+). It catalyses the reaction a long-chain fatty acyl-CoA + H2O = a long-chain fatty acid + CoA + H(+). The enzyme catalyses a long-chain fatty acid(in) + ATP + H2O = a long-chain fatty acid(out) + ADP + phosphate + H(+). The catalysed reaction is pristanoyl-CoA + H2O = 2,6,10,14-tetramethylpentadecanoate + CoA + H(+). It carries out the reaction 2,6,10,14-tetramethylpentadecanoate(in) + ATP + H2O = 2,6,10,14-tetramethylpentadecanoate(out) + ADP + phosphate + H(+). It catalyses the reaction hexadecanedioyl-CoA + H2O = hexadecanedioate + CoA + H(+). The enzyme catalyses hexadecanedioate(in) + ATP + H2O = hexadecanedioate(out) + ADP + phosphate + H(+). The catalysed reaction is (5Z,8Z,11Z,14Z,17Z)-eicosapentaenoyl-CoA + H2O = (5Z,8Z,11Z,14Z,17Z)-eicosapentaenoate + CoA + H(+). It carries out the reaction (5Z,8Z,11Z,14Z,17Z)-eicosapentaenoate(in) + ATP + H2O = (5Z,8Z,11Z,14Z,17Z)-eicosapentaenoate(out) + ADP + phosphate + H(+). It catalyses the reaction (4Z,7Z,10Z,13Z,16Z,19Z)-docosahexaenoyl-CoA + H2O = (4Z,7Z,10Z,13Z,16Z,19Z)-docosahexaenoate + CoA + H(+). The enzyme catalyses (4Z,7Z,10Z,13Z,16Z,19Z)-docosahexaenoate(in) + ATP + H2O = (4Z,7Z,10Z,13Z,16Z,19Z)-docosahexaenoate(out) + ADP + phosphate + H(+). In terms of biological role, broad substrate specificity ATP-dependent transporter of the ATP-binding cassette (ABC) family that catalyzes the transport of long-chain fatty acids (LCFA)-CoA, dicarboxylic acids-CoA, long-branched-chain fatty acids-CoA and bile acids from the cytosol to the peroxisome lumen for beta-oxydation. Has fatty acyl-CoA thioesterase and ATPase activities. Probably hydrolyzes fatty acyl-CoAs into free fatty acids prior to their ATP-dependent transport into peroxisomes. Thus, play a role in regulation of LCFAs and energy metabolism namely, in the degradation and biosynthesis of fatty acids by beta-oxidation. The chain is ATP-binding cassette sub-family D member 3 (Abcd3) from Mus musculus (Mouse).